A 505-amino-acid chain; its full sequence is Prenylcysteine oxidase 1 (505 aa).

An N-terminal signal peptide occupies residues 1–28; it reads MGRFAAALVGSLFWLGLLLCGLGSLASA. N196, N323, and N353 each carry an N-linked (GlcNAc...) asparagine glycan.

This sequence belongs to the prenylcysteine oxidase family. FAD serves as cofactor. Highly expressed in the liver, kidney, heart and brain.

The protein localises to the lysosome. The enzyme catalyses an S-polyprenyl-L-cysteine + O2 + H2O = a polyprenal + L-cysteine + H2O2. The catalysed reaction is S-(2E,6E)-farnesyl-L-cysteine + O2 + H2O = (2E,6E)-farnesal + L-cysteine + H2O2. It catalyses the reaction [(2E,6E,10E)-geranylgeranyl]-L-cysteine + O2 + H2O = (2E,6E,10E)-geranylgeranial + L-cysteine + H2O2. Its function is as follows. Prenylcysteine oxidase that cleaves the thioether bond of prenyl-L-cysteines, such as farnesylcysteine and geranylgeranylcysteine. Only active against free prenylcysteines and not prenylcysteine residues within prenylated proteins or peptides. Involved in the final step in the degradation of prenylated proteins, by degrading prenylcysteines after the protein has been degraded. This chain is Prenylcysteine oxidase 1, found in Mus musculus (Mouse).